The chain runs to 598 residues: Elongation factor 4 (598 aa).

The region spanning 2–183 (KNIRNFCIIA…AIINRVPAPS (182 aa)) is the tr-type G domain. Residues 14 to 19 (DHGKST) and 130 to 133 (NKVD) each bind GTP.

This sequence belongs to the TRAFAC class translation factor GTPase superfamily. Classic translation factor GTPase family. LepA subfamily.

The protein resides in the cell inner membrane. The enzyme catalyses GTP + H2O = GDP + phosphate + H(+). Required for accurate and efficient protein synthesis under certain stress conditions. May act as a fidelity factor of the translation reaction, by catalyzing a one-codon backward translocation of tRNAs on improperly translocated ribosomes. Back-translocation proceeds from a post-translocation (POST) complex to a pre-translocation (PRE) complex, thus giving elongation factor G a second chance to translocate the tRNAs correctly. Binds to ribosomes in a GTP-dependent manner. This is Elongation factor 4 from Christiangramia forsetii (strain DSM 17595 / CGMCC 1.15422 / KT0803) (Gramella forsetii).